The primary structure comprises 501 residues: LIM domain-containing protein HDR3 (501 aa).

Residues 33–67 (GEANRRRPRVTAGEETTLWEEPVRPKKEEPPRHNN) form a disordered region. Residues 53-67 (EPVRPKKEEPPRHNN) are compositionally biased toward basic and acidic residues. UIM domains lie at 65-84 (HNNEEMDHALALALADDAKN) and 94-113 (ENDEELARAIQDSLNMNPYQ). In terms of domain architecture, LIM zinc-binding spans 131 to 191 (RVCGGCKHEI…KLCYKELHHP (61 aa)). Residues 429-448 (YASSSSSSCRPPPSKKGGIS) form a disordered region.

Interacts (via N-terminus) with GW6A (via C-terminus).

In terms of biological role, ubiquitin receptor that functions as a positive regulator of grain size and weight. Functions in the same genetic pathway as GW6A to regulate grain size. Modulates grain size in a similar manner to GW6A, by altering cell proliferation in spikelet hulls. Interacts with and enhances the ubiquitination of GW6A. This stabilizes GW6A, delays protein degradation by the 26S proteasome and enhances GW6A histone acetyltransferase activity. This Oryza sativa subsp. japonica (Rice) protein is LIM domain-containing protein HDR3.